A 1851-amino-acid chain; its full sequence is Voltage-dependent calcium channel type A subunit alpha-1 (1851 aa).

Topologically, residues 1–38 (MGGPKKEENPPGGGPTSLFILTEDNPIRKYTRFIIEWP) are cytoplasmic. The stretch at 25 to 316 (NPIRKYTRFI…LVLGVLSGEF (292 aa)) is one I repeat. Residues 39–57 (PFEYAVLLTIIANCVVLAL) traverse the membrane as a helical segment. Residues 58 to 75 (EEHLPGGDKTVLAQKLEK) are Extracellular-facing. Residues 76–95 (TEAYFLCIFCVEASLKILAL) form a helical membrane-spanning segment. The Cytoplasmic segment spans residues 96 to 107 (GLVLHKHSYLRN). A helical transmembrane segment spans residues 108-128 (IWNIMDFFVVVTGFMTQYPQI). Over 129–133 (GPEVD) the chain is Extracellular. Residues 134–152 (LRTLRAIRVLRPLKLVSGI) traverse the membrane as a helical segment. Topologically, residues 153 to 171 (PSLQVVLKSIIKAMAPLLQ) are cytoplasmic. A helical membrane pass occupies residues 172 to 191 (IGLLVLFAIVIFAIIGLEFY). At 192–288 (SGALHKTCYS…WTNDALGSAF (97 aa)) the chain is on the extracellular side. 2 N-linked (GlcNAc...) asparagine glycosylation sites follow: N234 and N235. A helical transmembrane segment spans residues 289-313 (NWIYFVPLIVIGSFFMLNLVLGVLS). The Cytoplasmic portion of the chain corresponds to 314–441 (GEFSNERNRV…FWIRHTVKTQ (128 aa)). Residues 381–417 (RKKLKSLGKSKSTDTEEEEAEEDYGDDGYLKTRSKPQ) are disordered. Over residues 395 to 406 (TEEEEAEEDYGD) the composition is skewed to acidic residues. One copy of the II repeat lies at 427–670 (EKRFRFWIRH…VFLAIAVDNL (244 aa)). The helical transmembrane segment at 442-460 (WFYWFVIVLVFLNTVCVAV) threads the bilayer. The Extracellular portion of the chain corresponds to 461–475 (EHYGQPSFLTEFLYY). Residues 476-495 (AEFIFLGLFMSEMFIKMYAL) form a helical membrane-spanning segment. At 496–503 (GPRIYFES) the chain is on the cytoplasmic side. The chain crosses the membrane as a helical span at residues 504-522 (SFNRFDCVVISGSIFEVIW). Residues 523–531 (SEVKGGSFG) are Extracellular-facing. The helical transmembrane segment at 532–550 (LSVLRALRLLRIFKVTKYW) threads the bilayer. Over 551 to 569 (SSLRNLVISLLNSMRSIIS) the chain is Cytoplasmic. A helical membrane pass occupies residues 570–589 (LLFLLFLFILIFALLGMQLF). Residues 590-642 (GGQFNLPGGTPETNFNTFPIALLTVFQILTGEDWNEVMYQGIISQGGAQKGMI) are Extracellular-facing. The chain crosses the membrane as a helical span at residues 643 to 667 (YSIYFIVLVLFGNYTLLNVFLAIAV). Topologically, residues 668–767 (DNLANAQELT…IRRGAHWVVN (100 aa)) are cytoplasmic. The interval 710–741 (ENGDGAVAPSKSKGKKKEEEKKEEEEVTEGPK) is disordered. The III repeat unit spans residues 762–1049 (AHWVVNLPYF…IITFQEQGEA (288 aa)). A helical membrane pass occupies residues 768–786 (LPYFDFFIMVVISMSSIAL). Residues 787 to 802 (AAEDPVRENSRRNKIL) are Extracellular-facing. A helical membrane pass occupies residues 803-822 (NYFDYAFTGVFTIEMLLKIV). The Cytoplasmic segment spans residues 823-834 (DLGVILHPGSYL). Residues 835–853 (REFWNIMDAVVVICAAVSF) traverse the membrane as a helical segment. Topologically, residues 854–866 (GFDMSGSSAGQNL) are extracellular. N865 is a glycosylation site (N-linked (GlcNAc...) asparagine). Residues 867 to 885 (STIKSLRVLRVLRPLKTIK) traverse the membrane as a helical segment. Topologically, residues 886–904 (RVPKLKAVFDCVVNSLKNV) are cytoplasmic. A helical transmembrane segment spans residues 905 to 924 (VNILIVYILFQFIFSVIGVQ). Residues 925–1013 (LFNGKFFYCT…EDRGPIQNFR (89 aa)) are Extracellular-facing. A helical transmembrane segment spans residues 1014-1038 (IEMSIFYIVYFIVFPFFFVNIFVAL). At 1039–1093 (IIITFQEQGEAELQDGEIDKNQKSCIDFTIGARPLERYMPKNRNTFKYKVWRIVV) the chain is on the cytoplasmic side. The IV repeat unit spans residues 1086-1347 (YKVWRIVVST…DNFDYLTRDS (262 aa)). Residues 1094–1122 (STPFEYFIMMLIVFNTLLLMMKYHNQGDM) form a helical membrane-spanning segment. Residues 1123–1127 (YEKSL) are Extracellular-facing. A helical transmembrane segment spans residues 1128 to 1147 (KYINMGFTGMFSVETVLKII). The Cytoplasmic portion of the chain corresponds to 1148–1155 (GFGVKNFF). Residues 1156–1174 (KDPWNIFDLITVLGSIVDA) form a helical membrane-spanning segment. Topologically, residues 1175 to 1184 (LWMEFGHDDS) are extracellular. Residues 1185–1203 (NSINVGFLRLFRAARLIKL) traverse the membrane as a helical segment. Residues 1204-1222 (LRQGYTIRILLWTFVQSFK) are Cytoplasmic-facing. A helical transmembrane segment spans residues 1223–1242 (ALPYVCLLIAMLFFIYAIIG). The Extracellular segment spans residues 1243 to 1308 (MQVFGNIKLG…DAEKAPGEYC (66 aa)). Residues 1306–1348 (EYCGSTLAYAYFVSFIFFCSFLMLNLFVAVIMDNFDYLTRDSS) form a phenylalkylamine binding region. A helical membrane pass occupies residues 1309 to 1333 (GSTLAYAYFVSFIFFCSFLMLNLFV). Over 1334–1851 (AVIMDNFDYL…HSDSDEEDWC (518 aa)) the chain is Cytoplasmic. Residues 1353-1388 (HHLDEFVRIWAEYDPNATGKIHYTEMYDMLKNMDPP) enclose the EF-hand domain. Ca(2+) contacts are provided by D1366, N1368, T1370, K1372, and E1377. Disordered stretches follow at residues 1513-1572 (DASR…HHDI), 1588-1653 (TRHP…SPAR), 1685-1764 (RAGI…DRDR), and 1823-1851 (VLPSPVLNGFKPKSGLNPRHSDSDEEDWC). The segment covering 1589–1600 (RHPRHGNSHPRY) has biased composition (basic residues). Positions 1604-1619 (SWSASTSPARSPSPSR) are enriched in low complexity. Polar residues-rich tracts occupy residues 1637 to 1649 (YGTTSLCQRSRSP) and 1698 to 1710 (KPSTLQLKPTNIN). Positions 1734–1764 (HHRDLLRDPRDMYYSSRERERDRERLRDRDR) are enriched in basic and acidic residues.

The protein belongs to the calcium channel alpha-1 subunit (TC 1.A.1.11) family. Expressed widely in the embryonic nervous system.

It localises to the membrane. Functionally, voltage-sensitive calcium channels (VSCC) mediate the entry of calcium ions into excitable cells and are also involved in a variety of calcium-dependent processes, including muscle contraction, neurotransmitter release, gene expression, cell motility, cell division and cell death. Probably encodes a dihydropyridine-insensitive current. Vital for survival to adulthood. This Drosophila melanogaster (Fruit fly) protein is Voltage-dependent calcium channel type A subunit alpha-1 (cac).